The following is a 1071-amino-acid chain: Exportin-1 (1071 aa).

The 67-residue stretch at 46 to 112 folds into the Importin N-terminal domain; sequence AQEVLTHLKE…KKYVVGLIIK (67 aa). HEAT repeat units follow at residues 217–240, 241–277, 354–472, 515–553, 560–597, and 602–639; these read QNAPLVHATLETLLRFLNWIPLGY, IFETKLISTLIYKFLNVPMFRNVSLKCLTEIAGVSVS, MLLV…YVDT, RFLVTVIKDLLGLCEQKRGKDNKAIIASNIMYIVGQYPR, KFLKTVVNKLFEFMHETHDGVQDMACDTFIKIAQKCRR, and VQVGEVMPFIDEILNNINTIICDLQPQQVHTFYEAVGY. The necessary for interaction with Ran and nuclear export complex formation stretch occupies residues 327 to 450; the sequence is CTFLKEHGQL…VREFMKDTDS (124 aa). Position 391 is a phosphoserine (S391). Residues 411–481 are necessary for interaction with RANBP3; it reads TVLSKVRLLM…TEIIMTKKLQ (71 aa). K446 is modified (N6-acetyllysine). T448 bears the Phosphothreonine mark. Residue S450 is modified to Phosphoserine. Y454 is modified (phosphotyrosine). At K693 the chain carries N6-acetyllysine. HEAT repeat units follow at residues 775–813, 885–916, 917–954, and 1002–1039; these read NFVPPLLDAVLIDYQRNVPAAREPEVLSTMAIIVNKLGG, TMRNVADTGLQILFTLLQNVAQEEAAAQSFYQ, TYFCDILQHIFSVVTDTSHTAGLTMHASILAYMFNLVE, and FSLNQDIPAFKEHLRDFLVQIKEFAGEDTSDLFLEERE. S1031 carries the phosphoserine modification.

This sequence belongs to the exportin family. In terms of assembly, found in a U snRNA export complex with PHAX/RNUXA, NCBP1/CBP80, NCBP2/CBP20, RAN, XPO1 and m7G-capped RNA. Component of a nuclear export receptor complex composed of KPNB1, RAN, SNUPN and XPO1. Found in a trimeric export complex with SNUPN, RAN and XPO1. Found in a nuclear export complex with RANBP3 and RAN. Found in a 60S ribosomal subunit export complex with NMD3, RAN, XPO1. Interacts with DDX3X, NMD3, NUP42, NUP88, NUP214, RANBP3 and TERT. Interacts with NEMF (via its N-terminus). Interacts with the monomeric form of BIRC5/survivin deacetylated at 'Lys-129'. Interacts with SERTAD2; the interaction translocates SERTAD2 out of the nucleus. Interacts with ATF2. Interacts with SLC35G1 and STIM1. Interacts with DCAF8. Interacts with DTNBP1 and the interaction translocates DTNBP1 out of the nucleus. Interacts with CPEB3. Interacts with HAX1. Interacts with BOK; translocates to the cytoplasm. Interacts with HSP90AB1. Interacts with LRPPRC; interacts with LRPPRC alone and also when LRPPRC is in complex with EIF4E and with EIF4E sensitivity element (4ESE)-containing mRNAs to form an EIF4E-dependent mRNA export complex.

It localises to the cytoplasm. The protein resides in the nucleus. The protein localises to the nucleoplasm. It is found in the cajal body. Its subcellular location is the nucleolus. Mediates the nuclear export of cellular proteins (cargos) bearing a leucine-rich nuclear export signal (NES) and of RNAs. In the nucleus, in association with RANBP3, binds cooperatively to the NES on its target protein and to the GTPase Ran in its active GTP-bound form. Docking of this complex to the nuclear pore complex (NPC) is mediated through binding to nucleoporins. Upon transit of a nuclear export complex into the cytoplasm, disassembling of the complex and hydrolysis of Ran-GTP to Ran-GDP (induced by RANBP1 and RANGAP1, respectively) cause release of the cargo from the export receptor. The directionality of nuclear export is thought to be conferred by an asymmetric distribution of the GTP- and GDP-bound forms of Ran between the cytoplasm and nucleus. Involved in U3 snoRNA transport from Cajal bodies to nucleoli. Binds to late precursor U3 snoRNA bearing a TMG cap. In Mus musculus (Mouse), this protein is Exportin-1 (Xpo1).